The sequence spans 347 residues: Iron-sulfur cluster assembly protein SufC (347 aa).

In terms of domain architecture, ABC transporter spans 100–346 (LEIKDLHAIE…ENKGYSQFLK (247 aa)). Position 134-141 (134-141 (GRNGSGKS)) interacts with ATP.

The protein belongs to the ABC transporter superfamily. Ycf16 family. As to quaternary structure, component of a complex composed of SufB, SufC and SufD in a stoichiometric ratio of 1:2:1. Interacts with SufB. Interacts with SufD; the interaction enhances the ATPase activity of SufC. Proteolytically cleaved.

Its subcellular location is the plastid. The protein localises to the apicoplast. It carries out the reaction ATP + H2O = ADP + phosphate + H(+). The protein operates within cofactor biosynthesis; iron-sulfur cluster biosynthesis. Its function is as follows. Participates in the sulfur mobilization (SUF) pathway for iron-sulfur (Fe-S) cluster biogenesis. As part of a complex consisting of SufB-SufC(2)-SufD, involved in assembly of [4Fe-4S] clusters. Exhibits ATPase activity. The sequence is that of Iron-sulfur cluster assembly protein SufC from Plasmodium falciparum (isolate 3D7).